The primary structure comprises 215 residues: Probable glutathione S-transferase GSTF2 (215 aa).

The GST N-terminal domain occupies 2 to 83; it reads APMKLYGSTL…YVCRKNKPEL (82 aa). Glutathione is bound by residues Ser12, 41–42, 54–55, and 67–68; these read HK, QV, and ES. One can recognise a GST C-terminal domain in the interval 88 to 215; that stretch reads DLKESAMVDV…KVASLMKPPA (128 aa).

The protein belongs to the GST superfamily. Phi family. In terms of tissue distribution, constitutively expressed in roots. Expressed in anthers, callus, panicles, sheaths and stems (at protein level).

The catalysed reaction is RX + glutathione = an S-substituted glutathione + a halide anion + H(+). Its function is as follows. Conjugation of reduced glutathione to a wide number of exogenous and endogenous hydrophobic electrophiles. The sequence is that of Probable glutathione S-transferase GSTF2 (GSTF2) from Oryza sativa subsp. japonica (Rice).